The sequence spans 124 residues: Ribonuclease pancreatic (124 aa).

Over residues 1–13 (KETSAQKFERQHM) the composition is skewed to basic and acidic residues. The interval 1 to 25 (KETSAQKFERQHMDSTGSSSSSPTY) is disordered. Substrate-binding residues include lysine 7 and arginine 10. The active-site Proton acceptor is the histidine 12. 4 disulfide bridges follow: cysteine 26–cysteine 84, cysteine 40–cysteine 95, cysteine 58–cysteine 110, and cysteine 65–cysteine 72. Residues 41-45 (KPVNT), lysine 66, and arginine 85 each bind substrate. The active-site Proton donor is the histidine 119.

Belongs to the pancreatic ribonuclease family. As to quaternary structure, monomer. Interacts with and forms tight 1:1 complexes with RNH1. Dimerization of two such complexes may occur. Interaction with RNH1 inhibits this protein. Pancreas.

The protein localises to the secreted. The enzyme catalyses an [RNA] containing cytidine + H2O = an [RNA]-3'-cytidine-3'-phosphate + a 5'-hydroxy-ribonucleotide-3'-[RNA].. The catalysed reaction is an [RNA] containing uridine + H2O = an [RNA]-3'-uridine-3'-phosphate + a 5'-hydroxy-ribonucleotide-3'-[RNA].. Functionally, endonuclease that catalyzes the cleavage of RNA on the 3' side of pyrimidine nucleotides. Acts on single-stranded and double-stranded RNA. The chain is Ribonuclease pancreatic (RNASE1) from Ondatra zibethicus (Muskrat).